Here is a 429-residue protein sequence, read N- to C-terminus: Glucose-6-phosphate isomerase (429 aa).

Catalysis depends on E282, which acts as the Proton donor. Residues H303 and K418 contribute to the active site.

This sequence belongs to the GPI family.

The protein resides in the cytoplasm. It catalyses the reaction alpha-D-glucose 6-phosphate = beta-D-fructose 6-phosphate. It functions in the pathway carbohydrate biosynthesis; gluconeogenesis. It participates in carbohydrate degradation; glycolysis; D-glyceraldehyde 3-phosphate and glycerone phosphate from D-glucose: step 2/4. Functionally, catalyzes the reversible isomerization of glucose-6-phosphate to fructose-6-phosphate. The protein is Glucose-6-phosphate isomerase of Mesomycoplasma hyopneumoniae (strain J / ATCC 25934 / NCTC 10110) (Mycoplasma hyopneumoniae).